The primary structure comprises 316 residues: Acetaldehyde dehydrogenase 1 (316 aa).

Position 12–15 (12–15 (SGNI)) interacts with NAD(+). The active-site Acyl-thioester intermediate is the Cys132. NAD(+) is bound by residues 163 to 171 (SAGPGTRAN) and Asn291.

This sequence belongs to the acetaldehyde dehydrogenase family.

The enzyme catalyses acetaldehyde + NAD(+) + CoA = acetyl-CoA + NADH + H(+). This chain is Acetaldehyde dehydrogenase 1, found in Pseudomonas putida (strain ATCC 700007 / DSM 6899 / JCM 31910 / BCRC 17059 / LMG 24140 / F1).